The following is a 388-amino-acid chain: Phosphoglycerate kinase (388 aa).

Substrate contacts are provided by residues 24–26, arginine 37, 56–59, arginine 117, and arginine 165; these read DLN and RGGR. The segment at 26 to 136 is disordered; it reads NVPLDSDGEQ…RRPRNVQGRR (111 aa). Residues 34–55 show a composition bias toward basic and acidic residues; sequence EQGRITDPGPDHRVGADVERTG. Residues 102–136 are compositionally biased toward basic residues; the sequence is GGHRRPGPRRGVDRRRRPAAGKHPVRRPRNVQGRR. Residues lysine 215, glycine 303, glutamate 334, and 363–366 each bind ATP; that span reads GGDS.

Belongs to the phosphoglycerate kinase family. As to quaternary structure, monomer.

Its subcellular location is the cytoplasm. The catalysed reaction is (2R)-3-phosphoglycerate + ATP = (2R)-3-phospho-glyceroyl phosphate + ADP. Its pathway is carbohydrate degradation; glycolysis; pyruvate from D-glyceraldehyde 3-phosphate: step 2/5. This is Phosphoglycerate kinase (pgk) from Mycobacterium avium.